A 428-amino-acid chain; its full sequence is Glutamate-1-semialdehyde 2,1-aminomutase (428 aa).

K265 bears the N6-(pyridoxal phosphate)lysine mark.

The protein belongs to the class-III pyridoxal-phosphate-dependent aminotransferase family. HemL subfamily. Homodimer. Requires pyridoxal 5'-phosphate as cofactor.

It is found in the cytoplasm. The enzyme catalyses (S)-4-amino-5-oxopentanoate = 5-aminolevulinate. The protein operates within porphyrin-containing compound metabolism; protoporphyrin-IX biosynthesis; 5-aminolevulinate from L-glutamyl-tRNA(Glu): step 2/2. The sequence is that of Glutamate-1-semialdehyde 2,1-aminomutase from Hamiltonella defensa subsp. Acyrthosiphon pisum (strain 5AT).